The following is a 238-amino-acid chain: tRNA1(Val) (adenine(37)-N6)-methyltransferase (238 aa).

It belongs to the methyltransferase superfamily. tRNA (adenine-N(6)-)-methyltransferase family.

Its subcellular location is the cytoplasm. It catalyses the reaction adenosine(37) in tRNA1(Val) + S-adenosyl-L-methionine = N(6)-methyladenosine(37) in tRNA1(Val) + S-adenosyl-L-homocysteine + H(+). Specifically methylates the adenine in position 37 of tRNA(1)(Val) (anticodon cmo5UAC). The protein is tRNA1(Val) (adenine(37)-N6)-methyltransferase of Cytophaga hutchinsonii (strain ATCC 33406 / DSM 1761 / CIP 103989 / NBRC 15051 / NCIMB 9469 / D465).